The following is a 136-amino-acid chain: Protein Tat (136 aa).

Residues 22–37 (CTNCYCKKCCFHCPVC) are cysteine-rich. The core stretch occupies residues 38–48 (FTKKALGISYG). Residues 48 to 57 (GRKRRGRKSA) are compositionally biased toward basic residues. Residues 48–136 (GRKRRGRKSA…SGSSGSACKH (89 aa)) form a disordered region. The short motif at 49 to 55 (RKRRGRK) is the Nuclear localization signal, and RNA-binding (TAR) element. Residues 58–73 (VHSTNNQDPVRQQSLP) are compositionally biased toward polar residues. Positions 104-120 (SSVSSGRTSGTSSSGYT) are enriched in low complexity. The segment covering 123-136 (FKTSSGSSGSACKH) has biased composition (polar residues).

The protein belongs to the lentiviruses Tat family. Interacts with host CCNT1. Associates with the P-TEFb complex composed at least of Tat, P-TEFb (CDK9 and CCNT1), TAR RNA, RNA Pol II. Interacts with CCNT2; the resulting complex is unable to bind to TAR RNA.

The protein localises to the host nucleus. It localises to the host nucleolus. In terms of biological role, transcriptional activator that increases RNA Pol II processivity, thereby increasing the level of full-length viral transcripts. Recognizes a hairpin structure at the 5'-LTR of the nascent viral mRNAs referred to as the transactivation responsive RNA element (TAR) and recruits the cyclin T1-CDK9 complex (P-TEFb complex) that will in turn hyperphosphorylate the RNA polymerase II to allow efficient elongation. The CDK9 component of P-TEFb and other Tat-activated kinases hyperphosphorylate the C-terminus of RNA Pol II that becomes stabilized and much more processive. Extracellular circulating Tat can be endocytosed by surrounding uninfected cells via the binding to several surface receptors. Endosomal low pH allows Tat to cross the endosome membrane to enter the cytosol and eventually further translocate into the nucleus, thereby inducing severe cell dysfunctions ranging from cell activation to cell death. Through. The polypeptide is Protein Tat (Simian immunodeficiency virus (isolate TAN1) (SIV-cpz)).